A 967-amino-acid chain; its full sequence is Aminopeptidase N (967 aa).

Over 1–8 the chain is Cytoplasmic; it reads MAKGFYIS. A helical; Signal-anchor for type II membrane protein membrane pass occupies residues 9–32; that stretch reads KPVGILAILLGVAAVCTIIALSVV. The tract at residues 33–66 is cytosolic Ser/Thr-rich junction; that stretch reads YSQEKNRSTESSTAASTAAPTGPTTTVATTLDQS. Over 33–967 the chain is Extracellular; that stretch reads YSQEKNRSTE…VVLRWFTENS (935 aa). The N-linked (GlcNAc...) asparagine glycan is linked to Asn38. Residues 41–61 form a disordered region; that stretch reads TESSTAASTAAPTGPTTTVAT. Positions 67–967 are metalloprotease; it reads KPWNVYRLPK…VVLRWFTENS (901 aa). Residues Asn84 and Asn126 are each glycosylated (N-linked (GlcNAc...) asparagine). Sulfotyrosine is present on Tyr175. 2 N-linked (GlcNAc...) asparagine glycosylation sites follow: Asn233 and Asn338. A substrate-binding site is contributed by 351–355; the sequence is GAMEN. A Zn(2+)-binding site is contributed by His387. Glu388 (proton acceptor) is an active-site residue. His391 and Glu410 together coordinate Zn(2+). Sulfotyrosine is present on Tyr418. N-linked (GlcNAc...) asparagine glycosylation is found at Asn626, Asn682, and Asn740. An interaction with FCoV and TGEV spike glycoprotein region spans residues 670 to 840; the sequence is ASAQKVPVTL…GALACSNQVW (171 aa). 2 cysteine pairs are disulfide-bonded: Cys762-Cys769 and Cys799-Cys835.

This sequence belongs to the peptidase M1 family. As to quaternary structure, homodimer. Interacts with SLC6A19. In terms of assembly, (Microbial infection) Interacts with FCoV, CCoV, TGEV and HCoV-229E spike glycoprotein. Zn(2+) is required as a cofactor. In terms of processing, sulfated. N- and O-glycosylated. Post-translationally, may undergo proteolysis and give rise to a soluble form.

The protein resides in the cell membrane. It catalyses the reaction Release of an N-terminal amino acid, Xaa-|-Yaa- from a peptide, amide or arylamide. Xaa is preferably Ala, but may be most amino acids including Pro (slow action). When a terminal hydrophobic residue is followed by a prolyl residue, the two may be released as an intact Xaa-Pro dipeptide.. Its function is as follows. Broad specificity aminopeptidase which plays a role in the final digestion of peptides generated from hydrolysis of proteins by gastric and pancreatic proteases. Also involved in the processing of various peptides including peptide hormones, such as angiotensin III and IV, neuropeptides, and chemokines. May also be involved the cleavage of peptides bound to major histocompatibility complex class II molecules of antigen presenting cells. May have a role in angiogenesis and promote cholesterol crystallization. May have a role in amino acid transport by acting as binding partner of amino acid transporter SLC6A19 and regulating its activity. In terms of biological role, (Microbial infection) In case of feline coronavirus (FCoV) infection, serves as a receptor for FCoV spike glycoprotein. It is as well a receptor for other serogroup I coronaviruses, like canine coronavirus (CCoV), porcine transmissible gastroenteritis virus (TGEV), and human coronavirus 229E (HCoV-229E). Also serves as a receptor for infectious bronchitis virus (IBV, Arkansas 99 serotype) in serogroup III. The sequence is that of Aminopeptidase N (ANPEP) from Felis catus (Cat).